A 449-amino-acid chain; its full sequence is Glucose-6-phosphate isomerase (449 aa).

The active-site Proton donor is the Glu-291. Catalysis depends on residues His-312 and Lys-426.

Belongs to the GPI family.

Its subcellular location is the cytoplasm. It catalyses the reaction alpha-D-glucose 6-phosphate = beta-D-fructose 6-phosphate. It functions in the pathway carbohydrate biosynthesis; gluconeogenesis. Its pathway is carbohydrate degradation; glycolysis; D-glyceraldehyde 3-phosphate and glycerone phosphate from D-glucose: step 2/4. Catalyzes the reversible isomerization of glucose-6-phosphate to fructose-6-phosphate. The chain is Glucose-6-phosphate isomerase from Streptococcus gordonii (strain Challis / ATCC 35105 / BCRC 15272 / CH1 / DL1 / V288).